A 419-amino-acid chain; its full sequence is 3-oxo-isoapionate-4-phosphate decarboxylase (419 aa).

Residues Lys179, Asp181, and Glu182 each coordinate Mg(2+). Lys179 is modified (N6-carboxylysine).

It belongs to the RuBisCO large chain family. Mg(2+) serves as cofactor.

The enzyme catalyses 3-oxoisoapionate 4-phosphate + H(+) = L-erythrulose 1-phosphate + CO2. Its pathway is carbohydrate metabolism. In terms of biological role, involved in catabolism of D-apiose. Catalyzes the decarboxylation of 3-oxo-isoapionate 4-phosphate to L-erythrulose 1-phosphate. The sequence is that of 3-oxo-isoapionate-4-phosphate decarboxylase from Rhizobium rhizogenes (strain K84 / ATCC BAA-868) (Agrobacterium radiobacter).